A 406-amino-acid polypeptide reads, in one-letter code: Tryptophan 2,3-dioxygenase (406 aa).

Substrate is bound by residues 72–76 (FIVTH) and arginine 144. Histidine 328 is a heme binding site. Substrate is bound at residue threonine 342.

It belongs to the tryptophan 2,3-dioxygenase family. As to quaternary structure, homotetramer. Dimer of dimers. It depends on heme as a cofactor.

It carries out the reaction L-tryptophan + O2 = N-formyl-L-kynurenine. Its pathway is amino-acid degradation; L-tryptophan degradation via kynurenine pathway; L-kynurenine from L-tryptophan: step 1/2. In terms of biological role, heme-dependent dioxygenase that catalyzes the oxidative cleavage of the L-tryptophan (L-Trp) pyrrole ring and converts L-tryptophan to N-formyl-L-kynurenine. Catalyzes the oxidative cleavage of the indole moiety. The sequence is that of Tryptophan 2,3-dioxygenase from Xenopus tropicalis (Western clawed frog).